Consider the following 123-residue polypeptide: Large ribosomal subunit protein uL14 (123 aa).

The protein belongs to the universal ribosomal protein uL14 family. Part of the 50S ribosomal subunit. Forms a cluster with proteins L3 and L19. In the 70S ribosome, L14 and L19 interact and together make contacts with the 16S rRNA in bridges B5 and B8.

In terms of biological role, binds to 23S rRNA. Forms part of two intersubunit bridges in the 70S ribosome. The chain is Large ribosomal subunit protein uL14 from Buchnera aphidicola subsp. Cinara cedri (strain Cc).